The sequence spans 345 residues: Phosphoribosylformylglycinamidine cyclo-ligase (345 aa).

This sequence belongs to the AIR synthase family.

The protein localises to the cytoplasm. It carries out the reaction 2-formamido-N(1)-(5-O-phospho-beta-D-ribosyl)acetamidine + ATP = 5-amino-1-(5-phospho-beta-D-ribosyl)imidazole + ADP + phosphate + H(+). Its pathway is purine metabolism; IMP biosynthesis via de novo pathway; 5-amino-1-(5-phospho-D-ribosyl)imidazole from N(2)-formyl-N(1)-(5-phospho-D-ribosyl)glycinamide: step 2/2. The protein is Phosphoribosylformylglycinamidine cyclo-ligase of Limosilactobacillus reuteri (strain DSM 20016) (Lactobacillus reuteri).